Reading from the N-terminus, the 364-residue chain is WAT1-related protein At3g30340 (364 aa).

10 consecutive transmembrane segments (helical) span residues 9 to 29, 41 to 61, 76 to 96, 102 to 122, 138 to 158, 183 to 203, 215 to 235, 251 to 271, 277 to 297, and 304 to 324; these read WKAV…NVMF, VATT…AIFL, SLFF…LIGL, TFSL…ALVF, LLGT…KGTA, WAMG…WFIV, YTST…LSLI, VLAL…GMSW, GAVF…IFSF, and IYCG…ILLW. 2 EamA domains span residues 26–152 and 195–323; these read NVMF…LVLT and IIWS…YILL.

The protein belongs to the drug/metabolite transporter (DMT) superfamily. Plant drug/metabolite exporter (P-DME) (TC 2.A.7.4) family.

It is found in the membrane. This Arabidopsis thaliana (Mouse-ear cress) protein is WAT1-related protein At3g30340.